Consider the following 188-residue polypeptide: MRVIASSIRKGNVIEQDGKLYVVVSAENIHPGKGTPVSQIEMRRISDGVKISERYKTTDQVEKATIEERNFTFLYEDGDGYHFMNPETYDQVQVSKDVVGDAAAYLQPDMTVKLSTHDVNVVSLALPQRVTLEVVETEPVTKGQTASSSYKPAVLSNGIRTTVPPHIAVGTRIVVMTEDGSYSERAKD.

Belongs to the elongation factor P family.

It is found in the cytoplasm. Its pathway is protein biosynthesis; polypeptide chain elongation. Functionally, involved in peptide bond synthesis. Stimulates efficient translation and peptide-bond synthesis on native or reconstituted 70S ribosomes in vitro. Probably functions indirectly by altering the affinity of the ribosome for aminoacyl-tRNA, thus increasing their reactivity as acceptors for peptidyl transferase. The protein is Elongation factor P of Bradyrhizobium diazoefficiens (strain JCM 10833 / BCRC 13528 / IAM 13628 / NBRC 14792 / USDA 110).